The chain runs to 264 residues: Thymidylate synthase (264 aa).

R21 provides a ligand contact to dUMP. H51 is a (6R)-5,10-methylene-5,6,7,8-tetrahydrofolate binding site. Residue R126–R127 participates in dUMP binding. C146 serves as the catalytic Nucleophile. DUMP-binding positions include R166 to D169, N177, and H207 to Y209. D169 contributes to the (6R)-5,10-methylene-5,6,7,8-tetrahydrofolate binding site. A (6R)-5,10-methylene-5,6,7,8-tetrahydrofolate-binding site is contributed by A263.

This sequence belongs to the thymidylate synthase family. Bacterial-type ThyA subfamily. In terms of assembly, homodimer.

It localises to the cytoplasm. It carries out the reaction dUMP + (6R)-5,10-methylene-5,6,7,8-tetrahydrofolate = 7,8-dihydrofolate + dTMP. It participates in pyrimidine metabolism; dTTP biosynthesis. Functionally, catalyzes the reductive methylation of 2'-deoxyuridine-5'-monophosphate (dUMP) to 2'-deoxythymidine-5'-monophosphate (dTMP) while utilizing 5,10-methylenetetrahydrofolate (mTHF) as the methyl donor and reductant in the reaction, yielding dihydrofolate (DHF) as a by-product. This enzymatic reaction provides an intracellular de novo source of dTMP, an essential precursor for DNA biosynthesis. This is Thymidylate synthase from Shewanella oneidensis (strain ATCC 700550 / JCM 31522 / CIP 106686 / LMG 19005 / NCIMB 14063 / MR-1).